Reading from the N-terminus, the 240-residue chain is MDVRGTAIRSDAGLFGYERALVRRGLGPVAGVDEAGRGACAGPMVVAAVVLDQRRLGLLRRLADSKLLTERVREEVHADVLAAAAAVSTIVIPAAEIDRNGVHVANIMGMRRAVAVLDVRPRYVLTDGFAVAGLGAESLAVIKGDLMVGCIAAASVVAKVTRDRIMRSLHKRYPEYDFAQHKGYVTAAHTAAMTRYGPCEQHRLSYVNVAALAAPAGETRSLRLEDRVAMTSLRGVTETA.

Positions 27-226 (GPVAGVDEAG…GETRSLRLED (200 aa)) constitute an RNase H type-2 domain. A divalent metal cation is bound by residues aspartate 33, glutamate 34, and aspartate 127.

Belongs to the RNase HII family. Mn(2+) is required as a cofactor. Requires Mg(2+) as cofactor.

The protein resides in the cytoplasm. It carries out the reaction Endonucleolytic cleavage to 5'-phosphomonoester.. Functionally, endonuclease that specifically degrades the RNA of RNA-DNA hybrids. This is Ribonuclease HII from Parafrankia sp. (strain EAN1pec).